A 222-amino-acid chain; its full sequence is Cytochrome b6 (222 aa).

Residues 39 to 59 traverse the membrane as a helical segment; sequence IFYCLGGITLVCFLVQFATGF. Position 42 (Cys42) interacts with heme c. Heme b contacts are provided by His93 and His107. 3 helical membrane-spanning segments follow: residues 97–117, 123–143, and 193–213; these read ASMMVLMMILHVFRVYLTGGF, LTWMTGVILAVITVSFGVTGY, and LHTFVFPWLIAVFMLAHFLMI. Residues His194 and His209 each contribute to the heme b site.

Belongs to the cytochrome b family. PetB subfamily. In terms of assembly, the 4 large subunits of the cytochrome b6-f complex are cytochrome b6, subunit IV (17 kDa polypeptide, PetD), cytochrome f and the Rieske protein, while the 4 small subunits are PetG, PetL, PetM and PetN. The complex functions as a dimer. The cofactor is heme b. It depends on heme c as a cofactor.

The protein localises to the cellular thylakoid membrane. Functionally, component of the cytochrome b6-f complex, which mediates electron transfer between photosystem II (PSII) and photosystem I (PSI), cyclic electron flow around PSI, and state transitions. In Crocosphaera subtropica (strain ATCC 51142 / BH68) (Cyanothece sp. (strain ATCC 51142)), this protein is Cytochrome b6.